The chain runs to 349 residues: MRLFRCCAAAVVAAESLLWLKNGSPFFAFLPGNGEIADNCSGNPCGGTAAGTCINTPSGYDCRCEPGYVLGVENDQVTCMMPSGVPMANFVQLSETPAACSSNPCGPEAAGTCKETNSGYICRCNQGYRISLDGTGNVTCIVRQESGCEENGCGPPDAVQSCRRLTGTAGRLCVCKENFIATIDASAHITCKRVPPHYRKPPFEFGKGGHPVDSEPSKRQREDEGESREPESDSTEPGRDQERRTPLEESQEPEGSTPDSQQSRGGSGSDSTESEEQGKEREEGSGHAGAIAGGVIGGLLLLSAAGAGVAYMRKSGSGGGEEIEYERGIEAAEASEVEVLVDLDSKTWD.

The signal sequence occupies residues 1–23 (MRLFRCCAAAVVAAESLLWLKNG). 3 consecutive EGF-like domains span residues 36–80 (IADN…VTCM), 96–134 (TPAACSSNPCGPEAAGTCKETNSGYICRCNQGYRISLDG), and 147–192 (GCEE…ITCK). Disulfide bonds link Cys40–Cys53, Cys45–Cys62, Cys64–Cys79, Cys100–Cys113, Cys105–Cys122, Cys124–Cys140, Cys148–Cys162, Cys153–Cys173, and Cys175–Cys191. Residues 194 to 291 (VPPHYRKPPF…EEGSGHAGAI (98 aa)) form a disordered region. An acidic domain region spans residues 204–283 (EFGKGGHPVD…SEEQGKEREE (80 aa)). Composition is skewed to basic and acidic residues over residues 210–247 (HPVDSEPSKRQREDEGESREPESDSTEPGRDQERRTPL) and 276–285 (EQGKEREEGS). A helical membrane pass occupies residues 290–310 (AIAGGVIGGLLLLSAAGAGVA).

In terms of assembly, interacts directly with MIC1. Part of the MIC6-MIC1-MIC4 complex. Subject to proteolytic processing involving both the N-terminus and the C-terminus. The first EGF-like domain (EGF-like domain 1) is removed by proteolytic cleavage by ASP3 and is not present in the mature protein. Released as soluble 35 kDa protein after proteolytic processing at the C-terminus.

It is found in the cytoplasmic vesicle. Its subcellular location is the secretory vesicle. The protein localises to the microneme membrane. It localises to the secreted. Functionally, escorter protein required for import of MIC1 and MIC4 adhesins into the microneme. This is Micronemal protein 6 from Toxoplasma gondii.